The chain runs to 128 residues: Thor profilin (128 aa).

It belongs to the Asgard profilin family.

It is found in the cytoplasm. The protein resides in the cytoskeleton. Has no profilin activity against rabbit actin. This chain is Thor profilin, found in Thorarchaeota archaeon (strain AB_25).